Reading from the N-terminus, the 142-residue chain is U1 small nuclear ribonucleoprotein C (142 aa).

Residues 4–36 form a Matrin-type zinc finger; sequence YYCDYCDTFLTHDSPSVRKTHNGGRKHKDNVRM.

The protein belongs to the U1 small nuclear ribonucleoprotein C family. U1 snRNP is composed of the 7 core Sm proteins B/B', D1, D2, D3, E, F and G that assemble in a heptameric protein ring on the Sm site of the small nuclear RNA to form the core snRNP, and at least 3 U1 snRNP-specific proteins U1-70K, U1-A and U1-C. U1-C interacts with U1 snRNA and the 5' splice-site region of the pre-mRNA.

It localises to the nucleus. In terms of biological role, component of the spliceosomal U1 snRNP, which is essential for recognition of the pre-mRNA 5' splice-site and the subsequent assembly of the spliceosome. U1-C is directly involved in initial 5' splice-site recognition for both constitutive and regulated alternative splicing. The interaction with the 5' splice-site seems to precede base-pairing between the pre-mRNA and the U1 snRNA. Stimulates commitment or early (E) complex formation by stabilizing the base pairing of the 5' end of the U1 snRNA and the 5' splice-site region. The polypeptide is U1 small nuclear ribonucleoprotein C (Caenorhabditis briggsae).